The chain runs to 737 residues: Delta and Notch-like epidermal growth factor-related receptor (737 aa).

Residues 1–34 form the signal peptide; the sequence is MQPRRAQAPGAQLLPALALLLLLLGAGPRGSSLA. Residues 35–640 lie on the Extracellular side of the membrane; sequence NPVPAAPLSA…LTNMPRHSLY (606 aa). 2 EGF-like domains span residues 44–92 and 94–133; these read APGP…ANCQ and VADPCASNPCHHGNCSSSSSSSSDGYLCICNEGYEGPNCE. Residues 44–133 are interaction with NOTCH1; it reads APGPCAAQPC…NEGYEGPNCE (90 aa). Intrachain disulfides connect Cys-48–Cys-59, Cys-53–Cys-80, Cys-82–Cys-91, Cys-98–Cys-108, Cys-103–Cys-121, and Cys-123–Cys-132. The N-linked (GlcNAc...) asparagine glycan is linked to Asn-223. EGF-like domains lie at 309–348, 349–390, 392–428, 430–466, and 468–503; these read PGESHANDLECSGKGKCTTKPSEATFSCTCEEQYVGTFCE, EYDA…ELCQ, KIDYCILDPCRNGATCISSLSGFTCQCPEGYFGSACE, KVDPCASSPCQNNGTCYVDGVHFTCNCSPGFTGPTCA, and LIDFCALSPCAHGTCRSVGTSYKCLCDPGYHGLYCE. 23 disulfide bridges follow: Cys-319–Cys-336, Cys-338–Cys-347, Cys-353–Cys-364, Cys-358–Cys-378, Cys-380–Cys-389, Cys-396–Cys-407, Cys-401–Cys-416, Cys-418–Cys-427, Cys-434–Cys-445, Cys-439–Cys-454, Cys-456–Cys-465, Cys-472–Cys-482, Cys-477–Cys-491, Cys-493–Cys-502, Cys-509–Cys-520, Cys-514–Cys-529, Cys-531–Cys-540, Cys-547–Cys-558, Cys-552–Cys-567, Cys-569–Cys-578, Cys-585–Cys-596, Cys-590–Cys-605, and Cys-607–Cys-616. An EGF-like 8; calcium-binding domain is found at 505–541; the sequence is EYNECLSAPCLNAATCRDLVNGYECVCLAEYKGTHCE. One can recognise an EGF-like 9 domain in the interval 543 to 579; it reads YKDPCANVSCLNGATCDSDGLNGTCICAPGFTGEECD. The Follistatin-like domain maps to 546–568; sequence PCANVSCLNGATCDSDGLNGTCI. Asn-564 carries an N-linked (GlcNAc...) asparagine glycan. The 37-residue stretch at 581–617 folds into the EGF-like 10; calcium-binding domain; sequence DINECDSNPCHHGGSCLDQPNGYNCHCPHGWVGANCE. Residues 641-661 traverse the membrane as a helical segment; it reads IIIGALCVAFILMLIILIVGI. The Cytoplasmic portion of the chain corresponds to 662–737; it reads CRISRIEYQG…LVTLIKTKDL (76 aa). The segment at 677-680 is interaction with AP1G1 and somatodendritic targeting; that stretch reads YEEF. A Phosphoserine modification is found at Ser-685. Phosphotyrosine occurs at positions 711 and 721. Ser-722 carries the post-translational modification Phosphoserine.

Interacts with AP1G1. Interacts with NOTCH1. In terms of tissue distribution, expressed in brain, spinal cord and adrenal gland.

The protein localises to the cell membrane. In terms of biological role, activator of the NOTCH1 pathway. May mediate neuron-glia interaction during astrocytogenesis. This is Delta and Notch-like epidermal growth factor-related receptor (DNER) from Homo sapiens (Human).